A 323-amino-acid polypeptide reads, in one-letter code: CYFIP-related Rac1 interactor A (323 aa).

Belongs to the CYRI family. In terms of assembly, interacts with RAC1 (GTP-bound form preferentially).

Its subcellular location is the membrane. May negatively regulate RAC1 signaling and RAC1-driven cytoskeletal remodeling. May regulate chemotaxis, cell migration and epithelial polarization by controlling the polarity, plasticity, duration and extent of protrusions. The sequence is that of CYFIP-related Rac1 interactor A (CYRIA) from Bos taurus (Bovine).